Consider the following 399-residue polypeptide: MALQTASMLPASFSIPKEGKIGASLKDSTLFGVSSLSDSLKGDFTSSALRCKELRQKVGAVRAETAAPATPAVNKSSSEGKKTLRKGNVVITGASSGLGLATAKALAESGKWHVIMACRDYLKAARAAKSAGLAKENYTIMHLDLASLDSVRQFVDNFRRSEMPLDVLINNAAVYFPTAKEPSFTADGFEISVGTNHLGHFLLSRLLLEDLKKSDYPSKRLIIVGSITGNTNTLAGNVPPKANLGDLRGLAGGLTGLNSSAMIDGGDFDGAKAYKDSKVCNMLTMQEFHRRYHEETGITFASLYPGCIATTGLFREHIPLFRTLFPPFQKYITKGYVSEEESGKRLAQVVSDPSLTKSGVYWSWNNASASFENQLSQEASDAEKARKVWEVSEKLVGLA.

The transit peptide at M1–E64 directs the protein to the chloroplast.

Belongs to the short-chain dehydrogenases/reductases (SDR) family. POR subfamily.

The protein resides in the plastid. It localises to the chloroplast. The catalysed reaction is chlorophyllide a + NADP(+) = protochlorophyllide a + NADPH + H(+). Its pathway is porphyrin-containing compound metabolism; chlorophyll biosynthesis. In terms of biological role, phototransformation of protochlorophyllide (Pchlide) to chlorophyllide (Chlide). The protein is Protochlorophyllide reductase, chloroplastic (3PCR) of Pisum sativum (Garden pea).